Consider the following 522-residue polypeptide: Tetratricopeptide repeat and J domain-containing co-chaperone DNJ1 (522 aa).

The signal sequence occupies residues 1 to 22 (MKGFLLVALPVLFLSLSTQVFG). TPR repeat units lie at residues 29-62 (AAQIVQNANRLLAEGSYSAAARAYGEAIELDPTG), 63-96 (YANYYKRATAYLSMGRHNAALDDFEQILRINPGF), 97-130 (VQAHYQRAKILAKEGDFAKAQYELKAYVRTKSDS), 142-175 (GEAAEKSALQAFEKGKWQVCVEHSTKALEVGPNS), 210-243 (TYLPLQLSNIAYFIRASSQAAAHIKQCLHFDPDS), 256-289 (LEKDAARVRNFIESGTYRQAIKILDGDDGLLVRF), and 356-389 (VDSWISRGERLLRVEKWEEAMRAVEKAFELSGRS). Residues 410–471 (DYYKVLGVPR…ELRQRYDNGD (62 aa)) form the J domain. A disordered region spans residues 465 to 494 (QRYDNGDDPNDPTGGQQHNPFAHHGGGMPF).

The protein localises to the endoplasmic reticulum lumen. Functionally, endoplasmic reticulum co-chaperone crucial for survival and virulence factor production at elevated temperatures representative of febrile patients during infection. Contributes to virulence in a mouse model of cryptococcosis. With chaperone CNE1, coordinately maintains ER homeostasis and contributes to maintenance of cell wall architecture. The chain is Tetratricopeptide repeat and J domain-containing co-chaperone DNJ1 from Cryptococcus neoformans var. grubii serotype A (strain H99 / ATCC 208821 / CBS 10515 / FGSC 9487) (Filobasidiella neoformans var. grubii).